A 224-amino-acid polypeptide reads, in one-letter code: Non-structural protein 3 (224 aa).

The region spanning 34–124 (NVVPIRQASN…RYKNALFIIF (91 aa)) is the CoV 3a-like viroporin TM domain. 3 consecutive transmembrane segments (helical) span residues 40–60 (QASNVTGFLFTSVFVYFFALF), 69–88 (YIMLAARFAVVFLYCPLLYY), and 95–111 (ATIICCALIGRLCLVCF). The region spanning 128–203 (TLSFLNGKAA…KLYVFSQHQI (76 aa)) is the CoV 3a-like viroporin CD domain.

It is found in the host membrane. The sequence is that of Non-structural protein 3 from Sus scrofa (Pig).